A 769-amino-acid polypeptide reads, in one-letter code: MGSYPDGFPGSMDELDFNKDFDLPPSSNQTLGLANGFYLDDLDFSSLDPPEAYPSQNNNNNNINNKAVAGDLLSSSSDDADFSDSVLKYISQVLMEEDMEEKPCMFHDALALQAAEKSLYEALGEKYPSSSSASSVDHPERLASDSPDGSCSGGAFSDYASTTTTTSSDSHWSVDGLENRPSWLHTPMPSNFVFQSTSRSNSVTGGGGGGNSAVYGSGFGDDLVSNMFKDDELAMQFKKGVEEASKFLPKSSQLFIDVDSYIPMNSGSKENGSEVFVKTEKKDETEHHHHHSYAPPPNRLTGKKSHWRDEDEDFVEERSNKQSAVYVEESELSEMFDKILVCGPGKPVCILNQNFPTESAKVVTAQSNGAKIRGKKSTSTSHSNDSKKETADLRTLLVLCAQAVSVDDRRTANEMLRQIREHSSPLGNGSERLAHYFANSLEARLAGTGTQIYTALSSKKTSAADMLKAYQTYMSVCPFKKAAIIFANHSMMRFTANANTIHIIDFGISYGFQWPALIHRLSLSRPGGSPKLRITGIELPQRGFRPAEGVQETGHRLARYCQRHNVPFEYNAIAQKWETIQVEDLKLRQGEYVVVNSLFRFRNLLDETVLVNSPRDAVLKLIRKINPNVFIPAILSGNYNAPFFVTRFREALFHYSAVFDMCDSKLAREDEMRLMYEKEFYGREIVNVVACEGTERVERPETYKQWQARLIRAGFRQLPLEKELMQNLKLKIENGYDKNFDVDQNGNWLLQGWKGRIVYASSLWVPSSS.

4 disordered regions span residues 1 to 23 (MGSY…DFDL), 128 to 157 (PSSS…GAFS), 279 to 320 (TEKK…ERSN), and 364 to 388 (TAQS…DSKK). The GRAS domain occupies 384-765 (NDSKKETADL…RIVYASSLWV (382 aa)). Positions 391-451 (ADLRTLLVLC…EARLAGTGTQ (61 aa)) are leucine repeat I (LRI). The segment at 470-536 (YQTYMSVCPF…GGSPKLRITG (67 aa)) is VHIID. Residues 501 to 505 (IHIID) carry the VHIID motif. The segment at 552–584 (ETGHRLARYCQRHNVPFEYNAIAQKWETIQVED) is leucine repeat II (LRII). The tract at residues 593–687 (VVVNSLFRFR…KEFYGREIVN (95 aa)) is PFYRE. The interval 690–765 (ACEGTERVER…RIVYASSLWV (76 aa)) is SAW.

It belongs to the GRAS family. In terms of tissue distribution, expressed in roots, shoots, flowers and siliques.

It localises to the nucleus. Functionally, probable transcription factor involved in plant development. The chain is Scarecrow-like protein 14 (SCL14) from Arabidopsis thaliana (Mouse-ear cress).